A 141-amino-acid polypeptide reads, in one-letter code: Transcription antitermination protein NusB (141 aa).

The protein belongs to the NusB family.

In terms of biological role, involved in transcription antitermination. Required for transcription of ribosomal RNA (rRNA) genes. Binds specifically to the boxA antiterminator sequence of the ribosomal RNA (rrn) operons. This chain is Transcription antitermination protein NusB, found in Neisseria meningitidis serogroup C (strain 053442).